Reading from the N-terminus, the 222-residue chain is 3-dehydroquinate dehydratase (222 aa).

Residues Glu-32–Arg-34 and Arg-64 each bind 3-dehydroquinate. His-117 serves as the catalytic Proton donor/acceptor. Lys-143 (schiff-base intermediate with substrate) is an active-site residue. Arg-181 is a 3-dehydroquinate binding site.

It belongs to the type-I 3-dehydroquinase family. Homodimer.

The catalysed reaction is 3-dehydroquinate = 3-dehydroshikimate + H2O. It participates in metabolic intermediate biosynthesis; chorismate biosynthesis; chorismate from D-erythrose 4-phosphate and phosphoenolpyruvate: step 3/7. In terms of biological role, involved in the third step of the chorismate pathway, which leads to the biosynthesis of aromatic amino acids. Catalyzes the cis-dehydration of 3-dehydroquinate (DHQ) and introduces the first double bond of the aromatic ring to yield 3-dehydroshikimate. The protein is 3-dehydroquinate dehydratase of Aeropyrum pernix (strain ATCC 700893 / DSM 11879 / JCM 9820 / NBRC 100138 / K1).